Consider the following 213-residue polypeptide: Protein PAE0745 (213 aa).

Positions 8 to 201 (EEGTFLVRLA…EKSPGGEVYE (194 aa)) constitute an AMMECR1 domain.

In Pyrobaculum aerophilum (strain ATCC 51768 / DSM 7523 / JCM 9630 / CIP 104966 / NBRC 100827 / IM2), this protein is Protein PAE0745.